A 501-amino-acid polypeptide reads, in one-letter code: Probable cytosol aminopeptidase (501 aa).

The Mn(2+) site is built by lysine 268 and aspartate 273. Lysine 280 is a catalytic residue. Residues aspartate 291, aspartate 350, and glutamate 352 each contribute to the Mn(2+) site. Arginine 354 is an active-site residue.

The protein belongs to the peptidase M17 family. Mn(2+) serves as cofactor.

It localises to the cytoplasm. It carries out the reaction Release of an N-terminal amino acid, Xaa-|-Yaa-, in which Xaa is preferably Leu, but may be other amino acids including Pro although not Arg or Lys, and Yaa may be Pro. Amino acid amides and methyl esters are also readily hydrolyzed, but rates on arylamides are exceedingly low.. The catalysed reaction is Release of an N-terminal amino acid, preferentially leucine, but not glutamic or aspartic acids.. Functionally, presumably involved in the processing and regular turnover of intracellular proteins. Catalyzes the removal of unsubstituted N-terminal amino acids from various peptides. The polypeptide is Probable cytosol aminopeptidase (Colwellia psychrerythraea (strain 34H / ATCC BAA-681) (Vibrio psychroerythus)).